Reading from the N-terminus, the 289-residue chain is Acetyl-coenzyme A carboxylase carboxyl transferase subunit beta (289 aa).

One can recognise a CoA carboxyltransferase N-terminal domain in the interval 28–289; it reads VMTKCPKCKK…QGGEMAVWQS (262 aa). Zn(2+)-binding residues include Cys-32, Cys-35, Cys-51, and Cys-54. The C4-type zinc finger occupies 32 to 54; that stretch reads CPKCKKIMYTKEVLKNLKVCVNC.

It belongs to the AccD/PCCB family. In terms of assembly, acetyl-CoA carboxylase is a heterohexamer composed of biotin carboxyl carrier protein (AccB), biotin carboxylase (AccC) and two subunits each of ACCase subunit alpha (AccA) and ACCase subunit beta (AccD). Zn(2+) serves as cofactor.

It localises to the cytoplasm. The catalysed reaction is N(6)-carboxybiotinyl-L-lysyl-[protein] + acetyl-CoA = N(6)-biotinyl-L-lysyl-[protein] + malonyl-CoA. It functions in the pathway lipid metabolism; malonyl-CoA biosynthesis; malonyl-CoA from acetyl-CoA: step 1/1. Its function is as follows. Component of the acetyl coenzyme A carboxylase (ACC) complex. Biotin carboxylase (BC) catalyzes the carboxylation of biotin on its carrier protein (BCCP) and then the CO(2) group is transferred by the transcarboxylase to acetyl-CoA to form malonyl-CoA. In Bacillus anthracis (strain A0248), this protein is Acetyl-coenzyme A carboxylase carboxyl transferase subunit beta.